A 300-amino-acid chain; its full sequence is Cholesterol 25-hydroxylase-like protein (300 aa).

Asn-9 is a glycosylation site (N-linked (GlcNAc...) asparagine). Transmembrane regions (helical) follow at residues 43 to 63 (LFPPFYALSIDYTWVAVFTFI), 95 to 115 (LQGWNQLLWIYPMALVQLIWV), and 130 to 152 (MVSQLAIFFLAFDFTYFWFHYFN). Residues 135 to 266 (AIFFLAFDFT…WFNYLDRLMG (132 aa)) form the Fatty acid hydroxylase domain. The Histidine box-1 motif lies at 148-152 (FHYFN). A Histidine box-2 motif is present at residues 163–167 (HSVHH). Residues 180–200 (LHPFELFFVATFITTVPWIFP) traverse the membrane as a helical segment. The Histidine box-3 signature appears at 242–248 (AHDMHHL).

It belongs to the sterol desaturase family. Fe cation is required as a cofactor.

Its subcellular location is the membrane. Probable sterol desaturase. This chain is Cholesterol 25-hydroxylase-like protein, found in Caenorhabditis briggsae.